A 219-amino-acid chain; its full sequence is VQ motif-containing protein 19 (219 aa).

The short motif at 47–56 (FKQVVQMLTG) is the VQ element. Residues 52-94 (QMLTGSSSPRSPDSPRPPTTPSGKGNFVIPPIKTAQPKKHSGN) form a disordered region. Phosphoserine occurs at positions 59, 65, 127, 131, 139, 141, and 152. Thr-155 is modified (phosphothreonine). 2 disordered regions span residues 156–177 (PLKQ…PLSE) and 190–219 (HRSP…SPEM). Phosphoserine occurs at positions 192 and 195. Thr-196 and Thr-211 each carry phosphothreonine. A phosphoserine mark is found at Ser-212 and Ser-216.

Post-translationally, phosphorylated on serine and threonine residues by MPK6.

The protein localises to the nucleus. In terms of biological role, may modulate WRKY transcription factor activities. In Arabidopsis thaliana (Mouse-ear cress), this protein is VQ motif-containing protein 19.